A 55-amino-acid polypeptide reads, in one-letter code: UPF0291 protein CA_C2726 (55 aa).

The protein belongs to the UPF0291 family.

It is found in the cytoplasm. The sequence is that of UPF0291 protein CA_C2726 from Clostridium acetobutylicum (strain ATCC 824 / DSM 792 / JCM 1419 / IAM 19013 / LMG 5710 / NBRC 13948 / NRRL B-527 / VKM B-1787 / 2291 / W).